The following is a 610-amino-acid chain: Replication protein E1 (610 aa).

The short motif at 83–85 (KRK) is the Nuclear localization signal element. Ser-93 and Ser-102 each carry phosphoserine; by host. The Nuclear export signal motif lies at 101–110 (LSPRLEAVTI). The interval 148 to 312 (ESGTLVVETD…MLDHESAASS (165 aa)) is DNA-binding region. The SF3 helicase domain occupies 411-561 (VNFISFLCAL…LPLKENDEVL (151 aa)). 437 to 444 (GPPDTGKS) contributes to the ATP binding site. Lys-518 is covalently cross-linked (Glycyl lysine isopeptide (Lys-Gly) (interchain with G-Cter in SUMO)). Positions 591–610 (ESGRSDRAFRCTAGTNTESI) are disordered.

This sequence belongs to the papillomaviridae E1 protein family. In terms of assembly, can form hexamers. Interacts with E2 protein; this interaction increases E1 DNA binding specificity. Interacts with host DNA polymerase subunit POLA2. Interacts with host single stranded DNA-binding protein RPA1. Interacts with host TOP1; this interaction stimulates the enzymatic activity of TOP1. In terms of processing, phosphorylated. Sumoylated.

Its subcellular location is the host nucleus. It catalyses the reaction Couples ATP hydrolysis with the unwinding of duplex DNA by translocating in the 3'-5' direction.. It carries out the reaction ATP + H2O = ADP + phosphate + H(+). Functionally, ATP-dependent DNA 3'-5' helicase required for initiation of viral DNA replication. It forms a complex with the viral E2 protein. The E1-E2 complex binds to the replication origin which contains binding sites for both proteins. During the initial step, a dimer of E1 interacts with a dimer of protein E2 leading to a complex that binds the viral origin of replication with high specificity. Then, a second dimer of E1 displaces the E2 dimer in an ATP-dependent manner to form the E1 tetramer. Following this, two E1 monomers are added to each half of the site, which results in the formation of two E1 trimers on the viral ori. Subsequently, two hexamers will be created. The double hexamer acts as a bi-directional helicase machinery and unwinds the viral DNA and then recruits the host DNA polymerase to start replication. This Human papillomavirus type 60 protein is Replication protein E1.